The sequence spans 310 residues: Malate dehydrogenase (310 aa).

NAD(+) is bound by residues 7-12 (GAGNVG) and D32. The substrate site is built by R81 and R87. NAD(+) contacts are provided by residues N94 and 117–119 (VSN). Substrate is bound by residues N119 and R150. H174 (proton acceptor) is an active-site residue.

Belongs to the LDH/MDH superfamily. MDH type 3 family. As to quaternary structure, homotetramer; arranged as a dimer of dimers.

It catalyses the reaction (S)-malate + NAD(+) = oxaloacetate + NADH + H(+). Its function is as follows. Catalyzes the reversible oxidation of malate to oxaloacetate. In Prosthecochloris vibrioformis (Chlorobium vibrioforme), this protein is Malate dehydrogenase.